A 354-amino-acid chain; its full sequence is Stearoyl-CoA desaturase (354 aa).

The disordered stretch occupies residues 1–28; the sequence is MPGHLLQEEMTSSYTTTTTTITEPPSES. Residues 1-67 lie on the Cytoplasmic side of the membrane; that stretch reads MPGHLLQEEM…EGPPPKLEYV (67 aa). Residues 8–28 show a composition bias toward low complexity; it reads EEMTSSYTTTTTTITEPPSES. A helical transmembrane segment spans residues 68–88; it reads WRNIILMALLHLGALYGLVLV. N70 contacts substrate. Residues 89 to 92 are Lumenal-facing; it reads PSSK. Residues 93–113 form a helical membrane-spanning segment; that stretch reads VYTLLWAFVYYVISIEGIGAG. Residues 114–212 lie on the Cytoplasmic side of the membrane; the sequence is VHRLWSHRTY…EKLVMFQRRY (99 aa). 2 residues coordinate Fe cation: H115 and H120. A Histidine box-1 motif is present at residues 115 to 120; sequence HRLWSH. The substrate site is built by N143, R150, and D151. Fe cation is bound by residues H152, H155, and H156. A Histidine box-2 motif is present at residues 152 to 156; it reads HRAHH. Residues R183 and K184 each contribute to the substrate site. S198 is subject to Phosphoserine. Residues 213 to 232 form a helical membrane-spanning segment; sequence YKPAILLMCFILPTFVPWYF. Topologically, residues 233–236 are lumenal; it reads WGEA. A helical transmembrane segment spans residues 237-258; that stretch reads FVNSLCVSTFLRYTLVLNATWL. W257 lines the substrate pocket. Topologically, residues 259–354 are cytoplasmic; it reads VNSAAHLYGY…RTGDGSCKSG (96 aa). Positions 264, 293, 296, and 297 each coordinate Fe cation. Positions 293–297 match the Histidine box-3 motif; the sequence is HNYHH.

This sequence belongs to the fatty acid desaturase type 1 family. Requires Fe(2+) as cofactor.

It is found in the endoplasmic reticulum membrane. It carries out the reaction octadecanoyl-CoA + 2 Fe(II)-[cytochrome b5] + O2 + 2 H(+) = (9Z)-octadecenoyl-CoA + 2 Fe(III)-[cytochrome b5] + 2 H2O. The catalysed reaction is hexadecanoyl-CoA + 2 Fe(II)-[cytochrome b5] + O2 + 2 H(+) = (9Z)-hexadecenoyl-CoA + 2 Fe(III)-[cytochrome b5] + 2 H2O. Functionally, stearoyl-CoA desaturase that utilizes O(2) and electrons from reduced cytochrome b5 to introduce the first double bond into saturated fatty acyl-CoA substrates. Catalyzes the insertion of a cis double bond at the delta-9 position into fatty acyl-CoA substrates including palmitoyl-CoA and stearoyl-CoA. Gives rise to a mixture of 16:1 and 18:1 unsaturated fatty acids. Plays an important role in lipid biosynthesis. Plays an important role in regulating the expression of genes that are involved in lipogenesis and in regulating mitochondrial fatty acid oxidation. Plays an important role in body energy homeostasis. Contributes to the biosynthesis of membrane phospholipids, cholesterol esters and triglycerides. In Mesocricetus auratus (Golden hamster), this protein is Stearoyl-CoA desaturase (SCD).